Consider the following 370-residue polypeptide: Phospho-N-acetylmuramoyl-pentapeptide-transferase (370 aa).

Helical transmembrane passes span 31–51 (LTSMFVTFWLGHKVIDFLYGL), 73–93 (TMGGLLIIGSLLLSVLLWGNL), 98–118 (IIVLSVFALCFSALGFADDYM), 135–155 (LLSILISLVFCILFFYYTGVI), 177–197 (GPVLALGVFAIPFSILVIIGS), 209–229 (GLATGTVAISVVTLGIIAYVS), 251–271 (VFLSALAGALFGFLWFNAHPA), 273–293 (VFMGDTGSLFLGATLGMIVIL), 298–318 (ILLLILGAIFVSEALSVILQV), and 347–367 (KIVIRFWIIAVILAIISLSTL).

The protein belongs to the glycosyltransferase 4 family. MraY subfamily. It depends on Mg(2+) as a cofactor.

The protein resides in the cell inner membrane. The enzyme catalyses UDP-N-acetyl-alpha-D-muramoyl-L-alanyl-gamma-D-glutamyl-meso-2,6-diaminopimeloyl-D-alanyl-D-alanine + di-trans,octa-cis-undecaprenyl phosphate = di-trans,octa-cis-undecaprenyl diphospho-N-acetyl-alpha-D-muramoyl-L-alanyl-D-glutamyl-meso-2,6-diaminopimeloyl-D-alanyl-D-alanine + UMP. It participates in cell wall biogenesis; peptidoglycan biosynthesis. Its function is as follows. Catalyzes the initial step of the lipid cycle reactions in the biosynthesis of the cell wall peptidoglycan: transfers peptidoglycan precursor phospho-MurNAc-pentapeptide from UDP-MurNAc-pentapeptide onto the lipid carrier undecaprenyl phosphate, yielding undecaprenyl-pyrophosphoryl-MurNAc-pentapeptide, known as lipid I. The chain is Phospho-N-acetylmuramoyl-pentapeptide-transferase from Leptospira borgpetersenii serovar Hardjo-bovis (strain JB197).